The chain runs to 228 residues: Ribosomal RNA small subunit methyltransferase G (228 aa).

Residues Gly-89, Leu-94, 140-141, and Arg-159 each bind S-adenosyl-L-methionine; that span reads VE.

Belongs to the methyltransferase superfamily. RNA methyltransferase RsmG family.

It localises to the cytoplasm. The enzyme catalyses guanosine(527) in 16S rRNA + S-adenosyl-L-methionine = N(7)-methylguanosine(527) in 16S rRNA + S-adenosyl-L-homocysteine. Specifically methylates the N7 position of guanine in position 527 of 16S rRNA. This chain is Ribosomal RNA small subunit methyltransferase G, found in Burkholderia lata (strain ATCC 17760 / DSM 23089 / LMG 22485 / NCIMB 9086 / R18194 / 383).